Reading from the N-terminus, the 333-residue chain is Testin-2 (333 aa).

The first 17 residues, 1-17 (MIAVLFLAILCLEVDST), serve as a signal peptide directing secretion. Intrachain disulfides connect C135–C178, C169–C211, and C269–C322. N173 is a glycosylation site (N-linked (GlcNAc...) asparagine). Residues H276 and N300 contribute to the active site.

Belongs to the peptidase C1 family. In terms of tissue distribution, sertoli cells.

Its subcellular location is the secreted. The sequence is that of Testin-2 (Testin) from Rattus norvegicus (Rat).